Reading from the N-terminus, the 428-residue chain is Serine--tRNA ligase (428 aa).

235 to 237 lines the L-serine pocket; sequence TAE. 266 to 268 contributes to the ATP binding site; it reads RSE. An L-serine-binding site is contributed by glutamate 289. 353–356 contributes to the ATP binding site; it reads EISS. Residue serine 389 participates in L-serine binding.

It belongs to the class-II aminoacyl-tRNA synthetase family. Type-1 seryl-tRNA synthetase subfamily. As to quaternary structure, homodimer. The tRNA molecule binds across the dimer.

The protein resides in the cytoplasm. The enzyme catalyses tRNA(Ser) + L-serine + ATP = L-seryl-tRNA(Ser) + AMP + diphosphate + H(+). It carries out the reaction tRNA(Sec) + L-serine + ATP = L-seryl-tRNA(Sec) + AMP + diphosphate + H(+). The protein operates within aminoacyl-tRNA biosynthesis; selenocysteinyl-tRNA(Sec) biosynthesis; L-seryl-tRNA(Sec) from L-serine and tRNA(Sec): step 1/1. Its function is as follows. Catalyzes the attachment of serine to tRNA(Ser). Is also able to aminoacylate tRNA(Sec) with serine, to form the misacylated tRNA L-seryl-tRNA(Sec), which will be further converted into selenocysteinyl-tRNA(Sec). This is Serine--tRNA ligase from Shewanella woodyi (strain ATCC 51908 / MS32).